We begin with the raw amino-acid sequence, 235 residues long: Coiled-coil domain-containing protein 71L (235 aa).

Basic residues predominate over residues 1-13; that stretch reads MRRSMKRRRRRRP. A disordered region spans residues 1–30; it reads MRRSMKRRRRRRPVAPATAARGGDFRAEDG. Residues Ser52 and Ser89 each carry the phosphoserine modification. The disordered stretch occupies residues 109-167; sequence PDPPGPPTARGQARRPVPRAAARRRRRGARAAAARRRKPRPPPPPPPPPEESCPAKPVA. Over residues 120–148 the composition is skewed to basic residues; that stretch reads QARRPVPRAAARRRRRGARAAAARRRKPR. Over residues 149–159 the composition is skewed to pro residues; it reads PPPPPPPPPEE. Residue Thr185 is modified to Phosphothreonine. Position 198 is a phosphoserine (Ser198).

This Homo sapiens (Human) protein is Coiled-coil domain-containing protein 71L (CCDC71L).